The chain runs to 974 residues: Receptor-like protein 7 (974 aa).

An N-terminal signal peptide occupies residues 1-24 (MSFLIRSICFLILIPSFLITFVSA). Over 25–930 (TQHLCHSDQK…EEEEEESFSW (906 aa)) the chain is Extracellular. Asn-54 and Asn-90 each carry an N-linked (GlcNAc...) asparagine glycan. 6 LRR repeats span residues 96-120 (LRHL…EFDK), 122-145 (TGLE…LLQL), 147-166 (KLVS…SFHY), 181-204 (LRNL…EFSN), 206-229 (RSLR…ILLI), and 230-252 (PNLQ…VFHE). The N-linked (GlcNAc...) asparagine glycan is linked to Asn-253. 5 LRR repeats span residues 254–277 (NSLL…ISSL), 278–301 (KNLT…LGNL), 302–325 (SHLS…IGNL), 327–349 (QLTN…LSNL), and 350–373 (TKLN…ISQL). 2 N-linked (GlcNAc...) asparagine glycosylation sites follow: Asn-279 and Asn-300. An N-linked (GlcNAc...) asparagine glycan is attached at Asn-348. One copy of the LRR 12; degenerate repeat lies at 374 to 396 (SKLKFFFADDNPFIGAILSPLLK). LRR repeat units follow at residues 397–422 (IPSL…IFML), 425–448 (LETF…VFSS), 454–472 (TLYI…SDFP), 473–495 (SNLE…IRKG), 496–519 (RNLQ…LWRM), 521–542 (TLNS…VKAS), 544–570 (ESQL…SLRY), 572–589 (SGSN…ICGL), 590–616 (SSLE…LMSS), 618–638 (SDLD…FMNA), 639–662 (TKLR…LTGC), 664–685 (SLEV…ELNS), 687–712 (QKLQ…VWFG), 713–737 (FPQL…YFMN), 785–809 (LTIY…IGLL), 810–833 (KELR…LANL), 834–857 (KNLE…LGTL), and 859–882 (SLAW…QFQR). Asn-434, Asn-466, and Asn-484 each carry an N-linked (GlcNAc...) asparagine glycan. A glycan (N-linked (GlcNAc...) asparagine) is linked at Asn-529. N-linked (GlcNAc...) asparagine glycosylation is found at Asn-577, Asn-603, Asn-624, and Asn-637. Asn-737 is a glycosylation site (N-linked (GlcNAc...) asparagine). Asn-816, Asn-845, and Asn-864 each carry an N-linked (GlcNAc...) asparagine glycan. The tract at residues 899–923 (LENVCGHIKESTPTQTEPLETKEEE) is disordered. Residues 931 to 951 (IAAGLGFAPGVVFGLAMGYIV) form a helical membrane-spanning segment. Over 952–974 (VSYKHQWFMKTFGRSKQQNTRTR) the chain is Cytoplasmic.

Belongs to the RLP family.

The protein resides in the cell membrane. The chain is Receptor-like protein 7 from Arabidopsis thaliana (Mouse-ear cress).